The chain runs to 287 residues: Inactive phospholipid phosphatase 7 (287 aa).

The tract at residues 1-75 (MPANQTRSRA…NNKDKKELPE (75 aa)) is disordered. The Cytoplasmic portion of the chain corresponds to 1–120 (MPANQTRSRA…SSSWGSVRSM (120 aa)). The segment covering 31-40 (SGGGGGGGES) has biased composition (gly residues). Positions 49-65 (QRQQQNQQQQGDNPQPE) are enriched in low complexity. Residues 121–141 (VKLLALTGHGIPWVFGTIVCL) traverse the membrane as a helical segment. The Extracellular segment spans residues 142–146 (MRSNT). The chain crosses the membrane as a helical span at residues 147 to 167 (LAGQEVLVNLLLALLLDVMTV). Residues 168–215 (SGMQKLVKRKGPWEMPPGFFDYLAMDIYSFPAAHASRAVMVSKFLLAH) lie on the Cytoplasmic side of the membrane. A helical membrane pass occupies residues 216 to 236 (LVLAVPLRILLVLWAILVGIS). Topologically, residues 237 to 247 (RVLLGRHHLTD) are extracellular. A helical membrane pass occupies residues 248–268 (VGCGFALGFLHYSLVEMVWLS). The Cytoplasmic segment spans residues 269 to 287 (SNTCQTLISIGTFNWSPLY).

It belongs to the PA-phosphatase related phosphoesterase family.

The protein localises to the nucleus envelope. Its subcellular location is the endoplasmic reticulum membrane. The protein resides in the membrane. In terms of biological role, plays a role as negative regulator of myoblast differentiation, in part through effects on MTOR signaling. Has no detectable enzymatic activity. This Danio rerio (Zebrafish) protein is Inactive phospholipid phosphatase 7.